The chain runs to 144 residues: MIKLECLQDPSPRKRRTKLLGRGPSSGHGKTSSRGHKGDCSRSGYKRRFGYEGGGVPLYRRVPTRGFSHKRFDKCVEEITTQRLNEIFDNGAEVSLEALKERKVIHRETSRVKVILKGALDKKLVWKDAAIVLSEGVKSLIEAV.

A disordered region spans residues 1 to 49 (MIKLECLQDPSPRKRRTKLLGRGPSSGHGKTSSRGHKGDCSRSGYKRRF).

The protein belongs to the universal ribosomal protein uL15 family. In terms of assembly, part of the 50S ribosomal subunit.

Binds to the 23S rRNA. The chain is Large ribosomal subunit protein uL15 from Chlamydia trachomatis serovar A (strain ATCC VR-571B / DSM 19440 / HAR-13).